The primary structure comprises 415 residues: Phosphoglycerate kinase (415 aa).

Substrate contacts are provided by residues 24-26 (DLN), Arg-43, 66-69 (HLGR), Arg-125, and Arg-165. ATP is bound by residues Lys-215, Gly-303, Glu-334, and 363–366 (GGDS).

The protein belongs to the phosphoglycerate kinase family. In terms of assembly, monomer.

The protein localises to the cytoplasm. It carries out the reaction (2R)-3-phosphoglycerate + ATP = (2R)-3-phospho-glyceroyl phosphate + ADP. The protein operates within carbohydrate degradation; glycolysis; pyruvate from D-glyceraldehyde 3-phosphate: step 2/5. This Mycobacterium avium (strain 104) protein is Phosphoglycerate kinase.